Consider the following 185-residue polypeptide: Large ribosomal subunit protein uL5 (185 aa).

This sequence belongs to the universal ribosomal protein uL5 family. Part of the 50S ribosomal subunit; part of the 5S rRNA/L5/L18/L25 subcomplex. Contacts the 5S rRNA and the P site tRNA. Forms a bridge to the 30S subunit in the 70S ribosome.

Functionally, this is one of the proteins that bind and probably mediate the attachment of the 5S RNA into the large ribosomal subunit, where it forms part of the central protuberance. In the 70S ribosome it contacts protein S13 of the 30S subunit (bridge B1b), connecting the 2 subunits; this bridge is implicated in subunit movement. Contacts the P site tRNA; the 5S rRNA and some of its associated proteins might help stabilize positioning of ribosome-bound tRNAs. The chain is Large ribosomal subunit protein uL5 from Magnetococcus marinus (strain ATCC BAA-1437 / JCM 17883 / MC-1).